A 457-amino-acid polypeptide reads, in one-letter code: 1-carboxybiuret hydrolase subunit AtzE (457 aa).

Active-site charge relay system residues include Lys74 and Ser150. Residue Ser174 is the Acyl-ester intermediate of the active site.

The protein belongs to the amidase family. As to quaternary structure, heterotetramer consisting of 2 AtzE and 2 AtzG subunits.

It catalyses the reaction 1-carboxybiuret + H2O = urea-1,3-dicarboxylate + NH4(+). Its pathway is xenobiotic degradation; atrazine degradation. In terms of biological role, hydrolyzes 1-carboxybiuret to urea-1,3-dicarboxylate and NH(3). The sequence is that of 1-carboxybiuret hydrolase subunit AtzE from Pseudomonas sp. (strain ADP).